Reading from the N-terminus, the 270-residue chain is Phosphoribosylformylglycinamidine synthase subunit PurQ (270 aa).

One can recognise a Glutamine amidotransferase type-1 domain in the interval Ala-5–Glu-251. The active-site Nucleophile is Cys-95. Active-site residues include His-236 and Glu-238.

Part of the FGAM synthase complex composed of 1 PurL, 1 PurQ and 2 PurS subunits.

It is found in the cytoplasm. It carries out the reaction N(2)-formyl-N(1)-(5-phospho-beta-D-ribosyl)glycinamide + L-glutamine + ATP + H2O = 2-formamido-N(1)-(5-O-phospho-beta-D-ribosyl)acetamidine + L-glutamate + ADP + phosphate + H(+). The catalysed reaction is L-glutamine + H2O = L-glutamate + NH4(+). The protein operates within purine metabolism; IMP biosynthesis via de novo pathway; 5-amino-1-(5-phospho-D-ribosyl)imidazole from N(2)-formyl-N(1)-(5-phospho-D-ribosyl)glycinamide: step 1/2. Its function is as follows. Part of the phosphoribosylformylglycinamidine synthase complex involved in the purines biosynthetic pathway. Catalyzes the ATP-dependent conversion of formylglycinamide ribonucleotide (FGAR) and glutamine to yield formylglycinamidine ribonucleotide (FGAM) and glutamate. The FGAM synthase complex is composed of three subunits. PurQ produces an ammonia molecule by converting glutamine to glutamate. PurL transfers the ammonia molecule to FGAR to form FGAM in an ATP-dependent manner. PurS interacts with PurQ and PurL and is thought to assist in the transfer of the ammonia molecule from PurQ to PurL. In Treponema denticola (strain ATCC 35405 / DSM 14222 / CIP 103919 / JCM 8153 / KCTC 15104), this protein is Phosphoribosylformylglycinamidine synthase subunit PurQ.